The chain runs to 214 residues: Glucose-6-phosphate isomerase (214 aa).

Residues histidine 92, histidine 94, glutamate 101, and histidine 140 each contribute to the Fe cation site.

This sequence belongs to the archaeal-type GPI family. In terms of assembly, homodimer.

It is found in the cytoplasm. The catalysed reaction is alpha-D-glucose 6-phosphate = beta-D-fructose 6-phosphate. The protein operates within carbohydrate degradation; glycolysis; D-glyceraldehyde 3-phosphate and glycerone phosphate from D-glucose: step 2/4. This chain is Glucose-6-phosphate isomerase, found in Sinorhizobium medicae (strain WSM419) (Ensifer medicae).